A 268-amino-acid chain; its full sequence is Protein DEEPER ROOTING 1 (268 aa).

Over residues 11-21 (LNGKQGNKKPN) the composition is skewed to low complexity. The disordered stretch occupies residues 11–39 (LNGKQGNKKPNTVPITTHPAKQEPREEFS). A compositionally biased stretch (basic and acidic residues) spans 30–39 (AKQEPREEFS). Residues 44–50 (GLLAIGT) carry the IGT motif motif. The disordered stretch occupies residues 220-246 (SRAASMKKYLEDRQIPTKKESNTEDDT). The segment covering 227 to 246 (KYLEDRQIPTKKESNTEDDT) has biased composition (basic and acidic residues).

It belongs to the LAZY family. As to expression, expressed in roots.

In terms of biological role, involved in the development of the root system architecture by influencing lateral root angles and primary root length. In Prunus persica (Peach), this protein is Protein DEEPER ROOTING 1.